A 1485-amino-acid chain; its full sequence is Sex-determining transformer protein 2 (1485 aa).

The first 28 residues, Met1–Ile28, serve as a signal peptide directing secretion. A run of 9 helical transmembrane segments spans residues Val438–Trp458, Ile490–Leu510, Trp584–Ile604, Gly732–Ile752, Leu923–Thr943, Leu950–Phe970, Asp980–Phe1000, Ala1033–Val1053, and Thr1063–Ala1083. The tract at residues Asp1131 to Lys1271 is interaction with fem-3. The tract at residues Tyr1143 to Asn1175 is disordered. Residues Ala1181–Leu1201 form a helical membrane-spanning segment. Disordered stretches follow at residues Ser1228–Glu1252, Glu1275–Arg1306, and Glu1348–Pro1384. Over residues Glu1275–Gln1284 the composition is skewed to basic and acidic residues. Residues Cys1401–Arg1422 are MX regulatory domain; required for tra-1 binding. Positions Pro1442–Leu1485 are disordered. Residues Ala1456 to Asp1472 are compositionally biased toward basic and acidic residues.

Interacts with tra-1 and fem-3. In terms of tissue distribution, somatic and germline tissues.

Its subcellular location is the membrane. In terms of biological role, plays a major role in controlling sexual cell fates. Promotes female development in XX animals where it sequesters one or more of the FEM proteins to the membrane thereby freeing the tra-1 protein (a putative transcription factor) to enter the nucleus and promote female development. In XO animals it acts as a receptor for her-1 which prevents it from binding to FEM proteins thereby repressing the activity of tra-1. Negatively regulates male development when bound to fem-3 and is required together with tra-1 for promoting spermatogenesis. The protein is Sex-determining transformer protein 2 of Caenorhabditis remanei (Caenorhabditis vulgaris).